Here is a 118-residue protein sequence, read N- to C-terminus: MIQCILVMLGGGIGAVIRGFVTDVFNQKFNTSLPIPTLLINVVGSFCIGLLMGMCLNINWINPFIIVGILGGLTTFSTLSSELVKLLTTPKQINLFILYSILQYGVSFVACLLGYYLF.

2 helical membrane passes run 1–21 (MIQCILVMLGGGIGAVIRGFV) and 29–49 (FNTSLPIPTLLINVVGSFCIG). Na(+)-binding residues include Gly71 and Thr74. Residues 95–115 (LFILYSILQYGVSFVACLLGY) form a helical membrane-spanning segment.

Belongs to the fluoride channel Fluc/FEX (TC 1.A.43) family.

It is found in the cell membrane. It carries out the reaction fluoride(in) = fluoride(out). With respect to regulation, na(+) is not transported, but it plays an essential structural role and its presence is essential for fluoride channel function. Its function is as follows. Fluoride-specific ion channel. Important for reducing fluoride concentration in the cell, thus reducing its toxicity. This chain is Fluoride-specific ion channel FluC 1, found in Staphylococcus saprophyticus subsp. saprophyticus (strain ATCC 15305 / DSM 20229 / NCIMB 8711 / NCTC 7292 / S-41).